A 388-amino-acid polypeptide reads, in one-letter code: Succinyl-diaminopimelate desuccinylase (388 aa).

His-72 is a binding site for Zn(2+). Asp-74 is an active-site residue. Zn(2+) is bound at residue Asp-105. Glu-139 (proton acceptor) is an active-site residue. Glu-140, Glu-168, and His-353 together coordinate Zn(2+).

It belongs to the peptidase M20A family. DapE subfamily. In terms of assembly, homodimer. It depends on Zn(2+) as a cofactor. Co(2+) is required as a cofactor.

The enzyme catalyses N-succinyl-(2S,6S)-2,6-diaminopimelate + H2O = (2S,6S)-2,6-diaminopimelate + succinate. It functions in the pathway amino-acid biosynthesis; L-lysine biosynthesis via DAP pathway; LL-2,6-diaminopimelate from (S)-tetrahydrodipicolinate (succinylase route): step 3/3. Its function is as follows. Catalyzes the hydrolysis of N-succinyl-L,L-diaminopimelic acid (SDAP), forming succinate and LL-2,6-diaminopimelate (DAP), an intermediate involved in the bacterial biosynthesis of lysine and meso-diaminopimelic acid, an essential component of bacterial cell walls. This is Succinyl-diaminopimelate desuccinylase from Orientia tsutsugamushi (strain Ikeda) (Rickettsia tsutsugamushi).